We begin with the raw amino-acid sequence, 492 residues long: ATP synthase subunit beta, chloroplastic (492 aa).

An ATP-binding site is contributed by 170 to 177; that stretch reads GGAGVGKT.

The protein belongs to the ATPase alpha/beta chains family. F-type ATPases have 2 components, CF(1) - the catalytic core - and CF(0) - the membrane proton channel. CF(1) has five subunits: alpha(3), beta(3), gamma(1), delta(1), epsilon(1). CF(0) has four main subunits: a(1), b(1), b'(1) and c(9-12).

It is found in the plastid. The protein resides in the chloroplast thylakoid membrane. The catalysed reaction is ATP + H2O + 4 H(+)(in) = ADP + phosphate + 5 H(+)(out). Functionally, produces ATP from ADP in the presence of a proton gradient across the membrane. The catalytic sites are hosted primarily by the beta subunits. The protein is ATP synthase subunit beta, chloroplastic of Anthoceros angustus (Hornwort).